Here is a 79-residue protein sequence, read N- to C-terminus: Small ribosomal subunit protein bS16c (79 aa).

This sequence belongs to the bacterial ribosomal protein bS16 family.

The protein resides in the plastid. Its subcellular location is the chloroplast. In Trieres chinensis (Marine centric diatom), this protein is Small ribosomal subunit protein bS16c.